The sequence spans 748 residues: tRNA endonuclease ANKZF1 (748 aa).

The segment at 96 to 120 (LFCSACDQIFQNHQEQREHYKLDWH) adopts a C2H2-type zinc-finger fold. Residues 135 to 185 (SASDFEQQSSTGDLSSISGSDDTDSSSEEDLLPLDEGRAESEKPNRPPGFY) are disordered. Residues 143-154 (SSTGDLSSISGS) show a composition bias toward low complexity. Positions 155–167 (DDTDSSSEEDLLP) are enriched in acidic residues. The span at 169 to 179 (DEGRAESEKPN) shows a compositional bias: basic and acidic residues. The VLRF1 domain occupies 227 to 370 (GPRYYVVLMA…QRVLHKLTTL (144 aa)). The active site involves glutamine 270. 2 positions are modified to phosphoserine: serine 282 and serine 385. The segment covering 383-408 (FHSPETHWKPVREERKKDTEKEKTKV) has biased composition (basic and acidic residues). Disordered regions lie at residues 383–438 (FHSP…SEVE) and 460–497 (RRRR…TQEV). The segment covering 429-438 (SQEEDGSEVE) has biased composition (acidic residues). The span at 484 to 497 (QPQDEPFSQPTQEV) shows a compositional bias: polar residues. The ANK 1 repeat unit spans residues 515–545 (ELWDTLLAACRAGEVEVLKLQLATGLVDPGV). Position 555 is a phosphoserine (serine 555). The stretch at 556–585 (GGFTLLHAAAAAGRGLVVRLLLEAGADPTV) is one ANK 2 repeat. The tract at residues 621–677 (KARVPGPLTQEMEARQATRKKEQKAARRQREQQQRKQREQEEQEQEEQRRFAALSDR) is disordered. Residues 628 to 681 (LTQEMEARQATRKKEQKAARRQREQQQRKQREQEEQEQEEQRRFAALSDREKRA) are a coiled coil. Threonine 629 carries the phosphothreonine modification. Positions 632 to 677 (MEARQATRKKEQKAARRQREQQQRKQREQEEQEQEEQRRFAALSDR) are enriched in basic and acidic residues. A VCP/p97-interacting motif (VIM) region spans residues 654–666 (QRKQREQEEQEQE). Serine 702 carries the phosphoserine modification.

This sequence belongs to the ANKZF1/VMS1 family. As to quaternary structure, interacts (via VIM motif) with VCP.

It is found in the cytoplasm. Its function is as follows. Endonuclease that cleaves polypeptidyl-tRNAs downstream of the ribosome-associated quality control (RQC) pathway to release incompletely synthesized polypeptides for degradation. The RQC pathway disassembles aberrantly stalled translation complexes to recycle or degrade the constituent parts. ANKZF1 acts downstream disassembly of stalled ribosomes and specifically cleaves off the terminal 3'-CCA nucleotides universal to all tRNAs from polypeptidyl-tRNAs, releasing (1) ubiquitinated polypeptides from 60S ribosomal subunit for degradation and (2) cleaved tRNAs. ANKZF1-cleaved tRNAs are then repaired and recycled by ELAC1 and TRNT1. Also plays a role in the cellular response to hydrogen peroxide and in the maintenance of mitochondrial integrity under conditions of cellular stress. The sequence is that of tRNA endonuclease ANKZF1 from Mus musculus (Mouse).